We begin with the raw amino-acid sequence, 325 residues long: MSETATWQPSASIPNLLKRAAIMTEIRRFFADRGVLEVETPCMSQATVTDIHLFPFETRFVGPGHSQGMNLYLMTSPEYHMKRLLVAGCGPVFQLCRSFRNEEMGRHHNPEFTMLEWYRPHYDMYRLMNEVDDLLQQVLECQPAESLSYQQVFQRHLEIDPLSADKTQLREAAAKLDLSNIADTEEDRDTLLQLLFTMGVEPHIGKEKPTFVYHFPASQASLAQISTEDHRVAERFEVYFKGIELANGFHELTDAREQQQRFEQDNRKRAARGLPQQPIDNNLLEALKVGMPDCSGVALGVDRLVMLALGAESLAEVIAFTVDRA.

Position 76–78 (76–78 (SPE)) interacts with substrate. ATP-binding positions include 100 to 102 (RNE) and Asn109. Tyr118 contributes to the substrate binding site. 244–245 (EL) is a binding site for ATP. Glu251 provides a ligand contact to substrate. Residue Gly300 participates in ATP binding.

It belongs to the class-II aminoacyl-tRNA synthetase family. EpmA subfamily. As to quaternary structure, homodimer.

The catalysed reaction is D-beta-lysine + L-lysyl-[protein] + ATP = N(6)-((3R)-3,6-diaminohexanoyl)-L-lysyl-[protein] + AMP + diphosphate + H(+). In terms of biological role, with EpmB is involved in the beta-lysylation step of the post-translational modification of translation elongation factor P (EF-P). Catalyzes the ATP-dependent activation of (R)-beta-lysine produced by EpmB, forming a lysyl-adenylate, from which the beta-lysyl moiety is then transferred to the epsilon-amino group of a conserved specific lysine residue in EF-P. This Citrobacter koseri (strain ATCC BAA-895 / CDC 4225-83 / SGSC4696) protein is Elongation factor P--(R)-beta-lysine ligase.